Reading from the N-terminus, the 131-residue chain is Phosphoribosyl-AMP cyclohydrolase (131 aa).

A Mg(2+)-binding site is contributed by aspartate 78. Residue cysteine 79 participates in Zn(2+) binding. Residues aspartate 80 and aspartate 82 each coordinate Mg(2+). Cysteine 96 and cysteine 103 together coordinate Zn(2+).

It belongs to the PRA-CH family. In terms of assembly, homodimer. It depends on Mg(2+) as a cofactor. The cofactor is Zn(2+).

The protein resides in the cytoplasm. The enzyme catalyses 1-(5-phospho-beta-D-ribosyl)-5'-AMP + H2O = 1-(5-phospho-beta-D-ribosyl)-5-[(5-phospho-beta-D-ribosylamino)methylideneamino]imidazole-4-carboxamide. The protein operates within amino-acid biosynthesis; L-histidine biosynthesis; L-histidine from 5-phospho-alpha-D-ribose 1-diphosphate: step 3/9. Its function is as follows. Catalyzes the hydrolysis of the adenine ring of phosphoribosyl-AMP. In Neisseria gonorrhoeae (strain ATCC 700825 / FA 1090), this protein is Phosphoribosyl-AMP cyclohydrolase.